Consider the following 164-residue polypeptide: UPF0251 protein MM_1448 (164 aa).

Positions 91–100 (GDYRMPRGDR) are enriched in basic and acidic residues. The interval 91–123 (GDYRMPRGDRTGPAGQGPAGGGRGRGQGKGRGG) is disordered. The span at 104-115 (AGQGPAGGGRGR) shows a compositional bias: gly residues.

Belongs to the UPF0251 family.

The sequence is that of UPF0251 protein MM_1448 from Methanosarcina mazei (strain ATCC BAA-159 / DSM 3647 / Goe1 / Go1 / JCM 11833 / OCM 88) (Methanosarcina frisia).